The sequence spans 414 residues: Phospholipid-transporting ATPase accessory subunit LEM3 (414 aa).

The segment at 1–50 (MVNFDLGQVGEVFRRKDKGAIVSGDNPEEEEDVDASEFEEDEVKPVRTKN) is required for localization to the plasma membrane. Over 1-74 (MVNFDLGQVG…AINPVLTPRT (74 aa)) the chain is Cytoplasmic. Residues 20 to 52 (AIVSGDNPEEEEDVDASEFEEDEVKPVRTKNRR) are disordered. Over residues 26-42 (NPEEEEDVDASEFEEDE) the composition is skewed to acidic residues. At Ser-36 the chain carries Phosphoserine. The helical transmembrane segment at 75-95 (VLPLYLLIAVVFVIVGGCILA) threads the bilayer. Over 96-372 (QNSKVDEVTI…HGSHLGGRNP (277 aa)) the chain is Extracellular. Disulfide bonds link Cys-110/Cys-159 and Cys-216/Cys-231. N-linked (GlcNAc...) asparagine glycosylation occurs at Asn-113. Residues Asn-240, Asn-256, Asn-279, Asn-298, and Asn-332 are each glycosylated (N-linked (GlcNAc...) asparagine). Residues 373–393 (FLGIVYLIGGCICAAMALILL) traverse the membrane as a helical segment. Over 394 to 414 (TFWLFGGRKIADASSLSWNMK) the chain is Cytoplasmic. The interval 400-414 (GRKIADASSLSWNMK) is required for localization to the plasma membrane.

It belongs to the CDC50/LEM3 family. Component of a flippase complex consisting of DNF1 or DNF2 and LEM3. Interacts with DNF1; the interaction is direct and required for their mutual export from the endoplasmic reticulum. Interacts with DNF2; the interaction is direct and required for their mutual export from the endoplasmic reticulum.

The protein localises to the cell membrane. Its function is as follows. Accessory component of a P4-ATPase flippase complex which catalyzes the hydrolysis of ATP coupled to the transport of glucosylceramide, phosphatidylcholine, phosphatidylethanolamine, and small amounts of phosphatidylserine from the lumenal to the cytosolic leaflet of the cell membrane and ensures the maintenance of asymmetric distribution of phospholipids. Contributes to substrate binding and specificity of the P4-ATPase catalytic subunit. The protein is Phospholipid-transporting ATPase accessory subunit LEM3 of Saccharomyces cerevisiae (strain ATCC 204508 / S288c) (Baker's yeast).